Here is a 585-residue protein sequence, read N- to C-terminus: Arginine--tRNA ligase (585 aa).

Residues 131–141 carry the 'HIGH' region motif; that stretch reads ANPTGPMHVGH.

Belongs to the class-I aminoacyl-tRNA synthetase family. As to quaternary structure, monomer.

It is found in the cytoplasm. It carries out the reaction tRNA(Arg) + L-arginine + ATP = L-arginyl-tRNA(Arg) + AMP + diphosphate. The protein is Arginine--tRNA ligase of Brucella suis (strain ATCC 23445 / NCTC 10510).